The sequence spans 188 residues: Elongation factor P (188 aa).

It belongs to the elongation factor P family.

The protein resides in the cytoplasm. It participates in protein biosynthesis; polypeptide chain elongation. Involved in peptide bond synthesis. Stimulates efficient translation and peptide-bond synthesis on native or reconstituted 70S ribosomes in vitro. Probably functions indirectly by altering the affinity of the ribosome for aminoacyl-tRNA, thus increasing their reactivity as acceptors for peptidyl transferase. The chain is Elongation factor P from Exiguobacterium sp. (strain ATCC BAA-1283 / AT1b).